A 222-amino-acid polypeptide reads, in one-letter code: Glutathione S-transferase alpha-4 (222 aa).

The residue at position 1 (Met-1) is an N-acetylmethionine. The GST N-terminal domain maps to 3–83 (VKPKLYYFQG…YLAAKYNLYG (81 aa)). Glutathione-binding positions include Tyr-9, 54 to 55 (QV), and 67 to 68 (QT). In terms of domain architecture, GST C-terminal spans 85-208 (DLKERVRIDM…QPGSQRKPPP (124 aa)).

Belongs to the GST superfamily. Alpha family. Homodimer.

It is found in the cytoplasm. The catalysed reaction is RX + glutathione = an S-substituted glutathione + a halide anion + H(+). Its function is as follows. Conjugation of reduced glutathione to a wide number of exogenous and endogenous hydrophobic electrophiles. This chain is Glutathione S-transferase alpha-4 (Gsta4), found in Rattus norvegicus (Rat).